Consider the following 98-residue polypeptide: NADH-ubiquinone oxidoreductase chain 4L (98 aa).

Helical transmembrane passes span 1-21 (MPIIYMNIMLAFTISLLGMLT), 29-49 (SLLCLEGMMLSLFIMSTLMAL), and 58-78 (IVPIALLVFAACEAAVGLSLL).

Belongs to the complex I subunit 4L family. In terms of assembly, core subunit of respiratory chain NADH dehydrogenase (Complex I) which is composed of 45 different subunits.

It localises to the mitochondrion inner membrane. The catalysed reaction is a ubiquinone + NADH + 5 H(+)(in) = a ubiquinol + NAD(+) + 4 H(+)(out). In terms of biological role, core subunit of the mitochondrial membrane respiratory chain NADH dehydrogenase (Complex I) which catalyzes electron transfer from NADH through the respiratory chain, using ubiquinone as an electron acceptor. Part of the enzyme membrane arm which is embedded in the lipid bilayer and involved in proton translocation. This is NADH-ubiquinone oxidoreductase chain 4L (MT-ND4L) from Presbytis melalophos (Mitred leaf monkey).